Here is a 254-residue protein sequence, read N- to C-terminus: Hydroxyacylglutathione hydrolase (254 aa).

Zn(2+)-binding residues include His-54, His-56, Asp-58, His-59, His-111, Asp-130, and His-168.

This sequence belongs to the metallo-beta-lactamase superfamily. Glyoxalase II family. As to quaternary structure, monomer. Zn(2+) is required as a cofactor.

The catalysed reaction is an S-(2-hydroxyacyl)glutathione + H2O = a 2-hydroxy carboxylate + glutathione + H(+). It functions in the pathway secondary metabolite metabolism; methylglyoxal degradation; (R)-lactate from methylglyoxal: step 2/2. Thiolesterase that catalyzes the hydrolysis of S-D-lactoyl-glutathione to form glutathione and D-lactic acid. This Legionella pneumophila (strain Corby) protein is Hydroxyacylglutathione hydrolase.